We begin with the raw amino-acid sequence, 365 residues long: Probable L-tyrosine/L-aspartate decarboxylase (365 aa).

Residue lysine 224 is modified to N6-(pyridoxal phosphate)lysine.

The protein belongs to the group II decarboxylase family. MfnA subfamily. Requires pyridoxal 5'-phosphate as cofactor.

The catalysed reaction is L-tyrosine + H(+) = tyramine + CO2. It catalyses the reaction L-aspartate + H(+) = beta-alanine + CO2. The protein operates within cofactor biosynthesis; methanofuran biosynthesis. It participates in cofactor biosynthesis; coenzyme A biosynthesis. Catalyzes the decarboxylation of L-tyrosine to produce tyramine for methanofuran biosynthesis. Can also catalyze the decarboxylation of L-aspartate to produce beta-alanine for coenzyme A (CoA) biosynthesis. The chain is Probable L-tyrosine/L-aspartate decarboxylase from Methanoregula boonei (strain DSM 21154 / JCM 14090 / 6A8).